Here is a 405-residue protein sequence, read N- to C-terminus: Replication factor C large subunit (405 aa).

Residue 47 to 54 (GPPGVGKT) participates in ATP binding.

This sequence belongs to the activator 1 small subunits family. RfcL subfamily. In terms of assembly, heteromultimer composed of small subunits (RfcS) and large subunits (RfcL).

In terms of biological role, part of the RFC clamp loader complex which loads the PCNA sliding clamp onto DNA. This chain is Replication factor C large subunit, found in Saccharolobus islandicus (strain Y.N.15.51 / Yellowstone #2) (Sulfolobus islandicus).